The primary structure comprises 336 residues: HTH-type transcriptional regulator RafR (336 aa).

One can recognise an HTH lacI-type domain in the interval 2 to 55; the sequence is SLKAIATTLGISVTTVSRALGGFSDVAASTRERVEAEARRRGYRPNTQARRLKT. The H-T-H motif DNA-binding region spans 3–22; sequence LKAIATTLGISVTTVSRALG.

As to quaternary structure, homodimer.

In terms of biological role, repressor that negatively controls the expression of the raffinose (raf) operon by binding to the raf operator (rafO) DNA. Acts by binding to two operator sites, O1 and 02, which flank the -35 raf promoter box. RafR bound to 02 alone results in 45 % repression of transcription, whereas RafR bound to O1 leads to only 6% repression. The polypeptide is HTH-type transcriptional regulator RafR (Escherichia coli).